Here is a 719-residue protein sequence, read N- to C-terminus: Polyribonucleotide nucleotidyltransferase (719 aa).

Mg(2+) contacts are provided by Asp-491 and Asp-497. The KH domain occupies 558 to 617 (PRMLTIKINPEKIRDVIGKGGATIRALTEETGTQIDISDDGTIVIASVDETQAKEAQRRI). An S1 motif domain is found at 627-695 (GQIYDGSVLR…DKGRLRLSIK (69 aa)).

The protein belongs to the polyribonucleotide nucleotidyltransferase family. Mg(2+) is required as a cofactor.

It is found in the cytoplasm. The catalysed reaction is RNA(n+1) + phosphate = RNA(n) + a ribonucleoside 5'-diphosphate. Involved in mRNA degradation. Catalyzes the phosphorolysis of single-stranded polyribonucleotides processively in the 3'- to 5'-direction. The polypeptide is Polyribonucleotide nucleotidyltransferase (Bordetella parapertussis (strain 12822 / ATCC BAA-587 / NCTC 13253)).